The following is a 240-amino-acid chain: NDR1/HIN1-like protein 2 (240 aa).

The helical transmembrane segment at 57-77 (NILIAVAVILGVAALILWLIF) threads the bilayer. N-linked (GlcNAc...) asparagine glycans are attached at residues Asn109, Asn141, Asn151, and Asn223.

In terms of tissue distribution, expressed at low levels in roots, rosette leaves, cauline leaves, stems, flowers and siliques.

Its subcellular location is the cell membrane. In terms of biological role, may play a role in plant immunity. The sequence is that of NDR1/HIN1-like protein 2 from Arabidopsis thaliana (Mouse-ear cress).